The primary structure comprises 268 residues: Tropinone reductase homolog At2g29370 (268 aa).

22-46 provides a ligand contact to NADP(+); sequence LVTGGSKGLGKAVVEELAMLGARVH. Residue serine 155 coordinates substrate. Tyrosine 168 serves as the catalytic Proton acceptor.

This sequence belongs to the short-chain dehydrogenases/reductases (SDR) family. SDR65C subfamily.

This Arabidopsis thaliana (Mouse-ear cress) protein is Tropinone reductase homolog At2g29370.